A 214-amino-acid polypeptide reads, in one-letter code: Chaperone protein TorD (214 aa).

It belongs to the TorD/DmsD family. TorD subfamily.

Its subcellular location is the cytoplasm. Functionally, involved in the biogenesis of TorA. Acts on TorA before the insertion of the molybdenum cofactor and, as a result, probably favors a conformation of the apoenzyme that is competent for acquiring the cofactor. The polypeptide is Chaperone protein TorD (Aeromonas salmonicida (strain A449)).